A 458-amino-acid chain; its full sequence is UDP-N-acetylmuramoylalanine--D-glutamate ligase (458 aa).

124–130 is a binding site for ATP; that stretch reads GSDGKTT.

Belongs to the MurCDEF family.

The protein localises to the cytoplasm. It carries out the reaction UDP-N-acetyl-alpha-D-muramoyl-L-alanine + D-glutamate + ATP = UDP-N-acetyl-alpha-D-muramoyl-L-alanyl-D-glutamate + ADP + phosphate + H(+). It participates in cell wall biogenesis; peptidoglycan biosynthesis. Functionally, cell wall formation. Catalyzes the addition of glutamate to the nucleotide precursor UDP-N-acetylmuramoyl-L-alanine (UMA). The polypeptide is UDP-N-acetylmuramoylalanine--D-glutamate ligase (Clostridium botulinum (strain Alaska E43 / Type E3)).